Here is a 147-residue protein sequence, read N- to C-terminus: MPTPSMEDYIEIIYNLIESKGYARVSAIAEALDVHPSSVTKMVQKLDKDQYLDYEKYRGFVLTSKGKKIGERLVFRHELLEEFLEIIGVNDENIYDDVEGIEHHLSWNSIDRIGDLVNYFKDDDSRVKDLKKVIKESDQQVNETAEK.

The HTH dtxR-type domain maps to 1–63 (MPTPSMEDYI…YEKYRGFVLT (63 aa)). Mn(2+) is bound by residues Asp8, Glu11, His77, Glu99, Glu102, and His103.

It belongs to the DtxR/MntR family. Homodimer.

The protein localises to the cytoplasm. Its activity is regulated as follows. DNA binding is strongly activated by Mn(2+). In terms of biological role, central regulator of manganese homeostasis. The polypeptide is HTH-type transcriptional regulator MntR (Oceanobacillus iheyensis (strain DSM 14371 / CIP 107618 / JCM 11309 / KCTC 3954 / HTE831)).